We begin with the raw amino-acid sequence, 775 residues long: Homoaconitase, mitochondrial (775 aa).

The N-terminal 29 residues, 1-29, are a transit peptide targeting the mitochondrion; it reads MQSRLMPSGGPGRRWAFLRVPSTPQRRAF. Residues Cys-392, Cys-461, and Cys-464 each contribute to the [4Fe-4S] cluster site.

The protein belongs to the aconitase/IPM isomerase family. [4Fe-4S] cluster is required as a cofactor.

The protein localises to the mitochondrion. It catalyses the reaction (2R,3S)-homoisocitrate = cis-homoaconitate + H2O. The protein operates within amino-acid biosynthesis; L-lysine biosynthesis via AAA pathway; L-alpha-aminoadipate from 2-oxoglutarate: step 3/5. Catalyzes the reversible hydration of cis-homoaconitate to (2R,3S)-homoisocitrate, a step in the alpha-aminoadipate pathway for lysine biosynthesis. The polypeptide is Homoaconitase, mitochondrial (lys4) (Aspergillus oryzae (strain ATCC 42149 / RIB 40) (Yellow koji mold)).